The chain runs to 303 residues: Glycine--tRNA ligase alpha subunit (303 aa).

Belongs to the class-II aminoacyl-tRNA synthetase family. As to quaternary structure, tetramer of two alpha and two beta subunits.

Its subcellular location is the cytoplasm. It carries out the reaction tRNA(Gly) + glycine + ATP = glycyl-tRNA(Gly) + AMP + diphosphate. The sequence is that of Glycine--tRNA ligase alpha subunit from Klebsiella pneumoniae (strain 342).